A 192-amino-acid polypeptide reads, in one-letter code: uncharacterized protein (192 aa).

Its subcellular location is the virion. This is an uncharacterized protein from Acanthamoeba polyphaga mimivirus (APMV).